A 326-amino-acid polypeptide reads, in one-letter code: MRTSSRMENQASLSSIQRAVWDGKLPLQITLASSESRTYDQTDPYLIACPRISYLPSLLPRLRAFFSSSLIEPNSQPHEGWFSFEGVPLKWHLPVGLLYDLYAGADPASKGTRIDETDHPSSSLSDTLPWRLTVHFSDWPDEELVRLDADGMVMHDAFINSVKEADFLRNGTAKGIMTLSKEDSAGLWQAVQDVDLPSFQRISNILLPPPNQPFRNIPIRFFLPLSPDSGSPSLKVVQSPLPPSIPVATNTSQSTNLRNSPATQVQTLGSALHSLLPNLFPSRRTPVLAKPVLHGAAVPMSAPIEELVRSCAYGDGWAYIVIRMMG.

K163 is covalently cross-linked (Glycyl lysine isopeptide (Lys-Gly) (interchain with G-Cter in atg12)).

The protein belongs to the ATG5 family. Conjugated with atg12. In terms of processing, conjugated to atg12; which is essential for autophagy.

It localises to the preautophagosomal structure membrane. Its function is as follows. Involved in cytoplasm to vacuole transport (Cvt) and autophagic vesicle formation. Autophagy is essential for maintenance of amino acid levels and protein synthesis under nitrogen starvation. Required for selective autophagic degradation of the nucleus (nucleophagy). Also required for mitophagy, which eliminates defective or superfluous mitochondria in order to fulfill cellular energy requirements and prevent excess ROS production. Conjugation with atg12, through a ubiquitin-like conjugating system involving atg7 as an E1-like activating enzyme and atg10 as an E2-like conjugating enzyme, is essential for its function. The atg12-atg5 conjugate acts as an E3-like enzyme which is required for lipidation of atg8 and atg8 association to the vesicle membranes. This Neosartorya fischeri (strain ATCC 1020 / DSM 3700 / CBS 544.65 / FGSC A1164 / JCM 1740 / NRRL 181 / WB 181) (Aspergillus fischerianus) protein is Autophagy protein 5 (atg5).